A 140-amino-acid chain; its full sequence is FLYWCH family member 2 (140 aa).

Disordered stretches follow at residues 1-39 (MPLP…PRKF) and 84-140 (HPEA…GKSL). A Phosphoserine modification is found at S21. Residues 98-114 (PEQKRSRQDPGTDRTED) are compositionally biased toward basic and acidic residues. Residues 118–127 (AAGPPEAAGE) are compositionally biased toward low complexity.

This Homo sapiens (Human) protein is FLYWCH family member 2 (FLYWCH2).